The following is a 473-amino-acid chain: Photosystem II CP43 reaction center protein (473 aa).

Residues 1 to 14 constitute a propeptide that is removed on maturation; sequence MKTLYSLRRFYPVE. Residue T15 is modified to N-acetylthreonine. T15 carries the phosphothreonine modification. Helical transmembrane passes span 69–93, 134–155, 178–200, 255–275, and 291–312; these read LFEV…PHLA, LLGP…KDRN, KALY…RKIT, KPFA…LSYS, and WFNN…ASQA. A [CaMn4O5] cluster-binding site is contributed by E367. Residues 447 to 471 form a helical membrane-spanning segment; the sequence is RARAAAAGFEKGIDRDFEPVLSMTP.

The protein belongs to the PsbB/PsbC family. PsbC subfamily. In terms of assembly, PSII is composed of 1 copy each of membrane proteins PsbA, PsbB, PsbC, PsbD, PsbE, PsbF, PsbH, PsbI, PsbJ, PsbK, PsbL, PsbM, PsbT, PsbX, PsbY, PsbZ, Psb30/Ycf12, at least 3 peripheral proteins of the oxygen-evolving complex and a large number of cofactors. It forms dimeric complexes. It depends on Binds multiple chlorophylls and provides some of the ligands for the Ca-4Mn-5O cluster of the oxygen-evolving complex. It may also provide a ligand for a Cl- that is required for oxygen evolution. PSII binds additional chlorophylls, carotenoids and specific lipids. as a cofactor.

The protein resides in the plastid. It is found in the chloroplast thylakoid membrane. Its function is as follows. One of the components of the core complex of photosystem II (PSII). It binds chlorophyll and helps catalyze the primary light-induced photochemical processes of PSII. PSII is a light-driven water:plastoquinone oxidoreductase, using light energy to abstract electrons from H(2)O, generating O(2) and a proton gradient subsequently used for ATP formation. The polypeptide is Photosystem II CP43 reaction center protein (Piper cenocladum (Ant piper)).